The following is a 68-amino-acid chain: Putative membrane protein insertion efficiency factor (68 aa).

Belongs to the UPF0161 family.

Its subcellular location is the cell inner membrane. Its function is as follows. Could be involved in insertion of integral membrane proteins into the membrane. This chain is Putative membrane protein insertion efficiency factor, found in Aquifex aeolicus (strain VF5).